A 283-amino-acid polypeptide reads, in one-letter code: MERSPAVAGQFYPADPEELRKMIEWCFRHELGPGDLPETNDGPCTLPGVVAPHAGYQFSGPVAAHTYKVLAESGTPETVVILGPNHTGLGSAVATMTDGAWRTPLGSVEIDSEFATALVRKCGVMDDDLTAHANEHSIEVQLPFLQYVYGESFRFVPVCMAMHDLQTAREVGEAIVDVAEELDRNTVVIASTDFTHYEPHDQAQKKDRKVIERITALDEAGMIEIVERYNVSMCGVGPTAATIVAVKAMGASEGELLKYATSGDVSGDYSQVVGYAAIVFRRG.

The protein belongs to the MEMO1 family.

The polypeptide is MEMO1 family protein MK0963 (Methanopyrus kandleri (strain AV19 / DSM 6324 / JCM 9639 / NBRC 100938)).